The sequence spans 160 residues: Serine-protein kinase RsbW (160 aa).

Belongs to the anti-sigma-factor family.

It carries out the reaction L-seryl-[protein] + ATP = O-phospho-L-seryl-[protein] + ADP + H(+). The enzyme catalyses L-threonyl-[protein] + ATP = O-phospho-L-threonyl-[protein] + ADP + H(+). Negative regulator of sigma-B activity. Phosphorylates and inactivates its specific antagonist protein, RsbV. Upon phosphorylation of RsbV, RsbW is released and binds to sigma-B, thereby blocking its ability to form an RNA polymerase holoenzyme (E-sigma-B). This Bacillus cereus (strain ZK / E33L) protein is Serine-protein kinase RsbW.